Here is a 246-residue protein sequence, read N- to C-terminus: Uridylate kinase (246 aa).

Position 13-16 (13-16 (KLSG)) interacts with ATP. A UMP-binding site is contributed by G54. ATP contacts are provided by G55 and R59. UMP contacts are provided by residues D74 and 135–142 (AGMPYFST). The ATP site is built by N163, Y169, and D172.

It belongs to the UMP kinase family. In terms of assembly, homohexamer.

It localises to the cytoplasm. The catalysed reaction is UMP + ATP = UDP + ADP. It functions in the pathway pyrimidine metabolism; CTP biosynthesis via de novo pathway; UDP from UMP (UMPK route): step 1/1. With respect to regulation, inhibited by UTP. Functionally, catalyzes the reversible phosphorylation of UMP to UDP. The sequence is that of Uridylate kinase from Bifidobacterium longum (strain NCC 2705).